The primary structure comprises 156 residues: Small ribosomal subunit protein uS7 (156 aa).

Belongs to the universal ribosomal protein uS7 family. In terms of assembly, part of the 30S ribosomal subunit. Contacts proteins S9 and S11.

Its function is as follows. One of the primary rRNA binding proteins, it binds directly to 16S rRNA where it nucleates assembly of the head domain of the 30S subunit. Is located at the subunit interface close to the decoding center, probably blocks exit of the E-site tRNA. The sequence is that of Small ribosomal subunit protein uS7 from Nitrobacter hamburgensis (strain DSM 10229 / NCIMB 13809 / X14).